We begin with the raw amino-acid sequence, 158 residues long: Aspartate carbamoyltransferase regulatory chain (158 aa).

The Zn(2+) site is built by cysteine 111, cysteine 116, cysteine 140, and cysteine 143.

It belongs to the PyrI family. In terms of assembly, contains catalytic and regulatory chains. It depends on Zn(2+) as a cofactor.

Involved in allosteric regulation of aspartate carbamoyltransferase. This is Aspartate carbamoyltransferase regulatory chain from Metallosphaera sedula (strain ATCC 51363 / DSM 5348 / JCM 9185 / NBRC 15509 / TH2).